We begin with the raw amino-acid sequence, 490 residues long: Asparagine--tRNA ligase (490 aa).

This sequence belongs to the class-II aminoacyl-tRNA synthetase family. In terms of assembly, homodimer.

The protein resides in the cytoplasm. It catalyses the reaction tRNA(Asn) + L-asparagine + ATP = L-asparaginyl-tRNA(Asn) + AMP + diphosphate + H(+). The sequence is that of Asparagine--tRNA ligase from Rhodopirellula baltica (strain DSM 10527 / NCIMB 13988 / SH1).